Here is a 248-residue protein sequence, read N- to C-terminus: 5'-nucleotidase SurE (248 aa).

4 residues coordinate a divalent metal cation: Asp8, Asp9, Ser39, and Asn91.

Belongs to the SurE nucleotidase family. Requires a divalent metal cation as cofactor.

The protein resides in the cytoplasm. It carries out the reaction a ribonucleoside 5'-phosphate + H2O = a ribonucleoside + phosphate. Functionally, nucleotidase that shows phosphatase activity on nucleoside 5'-monophosphates. The protein is 5'-nucleotidase SurE of Neisseria meningitidis serogroup B (strain ATCC BAA-335 / MC58).